The sequence spans 473 residues: Adhesive plaque matrix protein 2 (473 aa).

The signal sequence occupies residues 1 to 17 (MLFSFFLLLTCTQLCLG). 3',4'-dihydroxyphenylalanine occurs at positions 23, 31, 36, and 43. EGF-like domains are found at residues 45-81 (PVNP…YNCN), 82-117 (LKNA…GRLC), 118-154 (EKNV…GPRC), 155-191 (EVHA…GPTC), 192-228 (QENA…GPEC), 229-265 (ERYV…GPTC), 266-301 (KVNV…GPTC), 302-340 (GENV…PTCE), 342-378 (KPNP…RHCT), 383-420 (KPNP…RHCT), and 425-461 (KKNP…RYCS). 33 disulfides stabilise this stretch: Cys-49/Cys-60, Cys-54/Cys-69, Cys-71/Cys-80, Cys-86/Cys-97, Cys-91/Cys-106, Cys-108/Cys-117, Cys-122/Cys-133, Cys-127/Cys-143, Cys-145/Cys-154, Cys-159/Cys-170, Cys-164/Cys-180, Cys-182/Cys-191, Cys-196/Cys-207, Cys-201/Cys-217, Cys-219/Cys-228, Cys-233/Cys-244, Cys-238/Cys-254, Cys-256/Cys-265, Cys-270/Cys-281, Cys-275/Cys-290, Cys-292/Cys-301, Cys-306/Cys-317, Cys-311/Cys-328, Cys-330/Cys-339, Cys-346/Cys-357, Cys-351/Cys-366, Cys-368/Cys-377, Cys-387/Cys-399, Cys-393/Cys-408, Cys-410/Cys-419, Cys-429/Cys-440, Cys-434/Cys-449, and Cys-451/Cys-460. N-linked (GlcNAc...) asparagine glycosylation occurs at Asn-93.

Contains L-DOPA (3',4'-dihydroxyphenylalanine). In terms of tissue distribution, produced by the byssal gland.

It is found in the secreted. Provides adhesiveness to the mussel's foot. Mussels produce one of the strongest water insoluble glues. The mussel's adhesive is a bundle of threads, called a byssus, formed by a fibrous collagenous core coated with adhesive proteins. The polypeptide is Adhesive plaque matrix protein 2 (FP2) (Mytilus galloprovincialis (Mediterranean mussel)).